A 121-amino-acid polypeptide reads, in one-letter code: Ribonuclease P protein component (121 aa).

It belongs to the RnpA family. In terms of assembly, consists of a catalytic RNA component (M1 or rnpB) and a protein subunit.

The catalysed reaction is Endonucleolytic cleavage of RNA, removing 5'-extranucleotides from tRNA precursor.. In terms of biological role, RNaseP catalyzes the removal of the 5'-leader sequence from pre-tRNA to produce the mature 5'-terminus. It can also cleave other RNA substrates such as 4.5S RNA. The protein component plays an auxiliary but essential role in vivo by binding to the 5'-leader sequence and broadening the substrate specificity of the ribozyme. The sequence is that of Ribonuclease P protein component from Neisseria meningitidis serogroup A / serotype 4A (strain DSM 15465 / Z2491).